A 351-amino-acid chain; its full sequence is UDP-N-acetylglucosamine--N-acetylmuramyl-(pentapeptide) pyrophosphoryl-undecaprenol N-acetylglucosamine transferase (351 aa).

Residues 11-13, N120, R161, S187, and Q281 contribute to the UDP-N-acetyl-alpha-D-glucosamine site; that span reads TGG.

Belongs to the glycosyltransferase 28 family. MurG subfamily.

It localises to the cell inner membrane. It catalyses the reaction di-trans,octa-cis-undecaprenyl diphospho-N-acetyl-alpha-D-muramoyl-L-alanyl-D-glutamyl-meso-2,6-diaminopimeloyl-D-alanyl-D-alanine + UDP-N-acetyl-alpha-D-glucosamine = di-trans,octa-cis-undecaprenyl diphospho-[N-acetyl-alpha-D-glucosaminyl-(1-&gt;4)]-N-acetyl-alpha-D-muramoyl-L-alanyl-D-glutamyl-meso-2,6-diaminopimeloyl-D-alanyl-D-alanine + UDP + H(+). The protein operates within cell wall biogenesis; peptidoglycan biosynthesis. In terms of biological role, cell wall formation. Catalyzes the transfer of a GlcNAc subunit on undecaprenyl-pyrophosphoryl-MurNAc-pentapeptide (lipid intermediate I) to form undecaprenyl-pyrophosphoryl-MurNAc-(pentapeptide)GlcNAc (lipid intermediate II). The chain is UDP-N-acetylglucosamine--N-acetylmuramyl-(pentapeptide) pyrophosphoryl-undecaprenol N-acetylglucosamine transferase from Rippkaea orientalis (strain PCC 8801 / RF-1) (Cyanothece sp. (strain PCC 8801)).